We begin with the raw amino-acid sequence, 708 residues long: Glycogen [starch] synthase isoform 1 (708 aa).

Residue R20 participates in UDP binding. S159 carries the phosphoserine modification. 2 residues coordinate UDP-alpha-D-glucose: H193 and R199. Alpha-D-glucose 6-phosphate-binding residues include H280, E281, Q283, H286, and K290. R320 is a UDP binding site. R320 lines the UDP-alpha-D-glucose pocket. At S363 the chain carries Phosphoserine. An alpha-D-glucose 6-phosphate-binding site is contributed by H500. The UDP-alpha-D-glucose site is built by E509, W511, and G512. T514 provides a ligand contact to UDP. Residue S560 is modified to Phosphoserine. Alpha-D-glucose 6-phosphate-binding residues include R583 and R587. A phosphoserine mark is found at S651 and S655. Residues S660 and S662 each carry the phosphoserine; by PKA modification. The interval 687 to 708 (STNGAIDNDDDDNDTSAYYEDN) is disordered. Residues 693 to 708 (DNDDDDNDTSAYYEDN) show a composition bias toward acidic residues.

The protein belongs to the glycosyltransferase 3 family.

The enzyme catalyses [(1-&gt;4)-alpha-D-glucosyl](n) + UDP-alpha-D-glucose = [(1-&gt;4)-alpha-D-glucosyl](n+1) + UDP + H(+). The protein operates within glycan biosynthesis; glycogen biosynthesis. With respect to regulation, allosteric activation by glucose-6-phosphate, and phosphorylation by a cAMP-dependent kinase. Functionally, glycogen synthase participates in the glycogen biosynthetic process along with glycogenin and glycogen branching enzyme. Extends the primer composed of a few glucose units formed by glycogenin by adding new glucose units to it. In this context, glycogen synthase transfers the glycosyl residue from UDP-Glc to the non-reducing end of alpha-1,4-glucan. The sequence is that of Glycogen [starch] synthase isoform 1 (GSY1) from Saccharomyces cerevisiae (strain ATCC 204508 / S288c) (Baker's yeast).